We begin with the raw amino-acid sequence, 503 residues long: Probable apyrase 4 (503 aa).

Low complexity predominate over residues 1–14 (MQRSNARSRSNINS). Residues 1–39 (MQRSNARSRSNINSDMVDPPEVQTSPGNHRSSPSTAAKP) form a disordered region. Residues 1–45 (MQRSNARSRSNINSDMVDPPEVQTSPGNHRSSPSTAAKPKSKRTK) lie on the Cytoplasmic side of the membrane. The chain crosses the membrane as a helical; Signal-anchor for type II membrane protein span at residues 46–66 (SIIFVIVACVTIALGLLFIGY). The Extracellular segment spans residues 67-503 (SILRSGRNRR…DLSNVAKYKI (437 aa)). An ATP-binding site is contributed by 83-93 (VIIDGGSSGTR). Residue Glu206 is the Proton acceptor of the active site. Position 230–240 (230–240 (GIVELGGASAQ)) interacts with ATP. N-linked (GlcNAc...) asparagine glycans are attached at residues Asn261, Asn293, and Asn338.

The protein belongs to the GDA1/CD39 NTPase family. Requires Ca(2+) as cofactor. In terms of tissue distribution, expressed both in the primary root and lateral root but not in the rosette leaves.

It localises to the membrane. It carries out the reaction a ribonucleoside 5'-triphosphate + 2 H2O = a ribonucleoside 5'-phosphate + 2 phosphate + 2 H(+). Catalyzes the hydrolysis of phosphoanhydride bonds of nucleoside tri- and di-phosphates. In Arabidopsis thaliana (Mouse-ear cress), this protein is Probable apyrase 4 (APY4).